The following is a 491-amino-acid chain: Argininosuccinate lyase (491 aa).

This sequence belongs to the lyase 1 family. Argininosuccinate lyase subfamily.

It localises to the cytoplasm. The catalysed reaction is 2-(N(omega)-L-arginino)succinate = fumarate + L-arginine. The protein operates within amino-acid biosynthesis; L-arginine biosynthesis; L-arginine from L-ornithine and carbamoyl phosphate: step 3/3. This chain is Argininosuccinate lyase, found in Methanococcoides burtonii (strain DSM 6242 / NBRC 107633 / OCM 468 / ACE-M).